The sequence spans 358 residues: tRNA-specific 2-thiouridylase MnmA (358 aa).

ATP contacts are provided by residues 6–13 and M32; that span reads ALSGGVDS. The active-site Nucleophile is the C103. A disulfide bridge links C103 with C201. G127 contacts ATP. The interval 151–153 is interaction with tRNA; sequence KDQ. C201 acts as the Cysteine persulfide intermediate in catalysis.

It belongs to the MnmA/TRMU family.

It localises to the cytoplasm. The catalysed reaction is S-sulfanyl-L-cysteinyl-[protein] + uridine(34) in tRNA + AH2 + ATP = 2-thiouridine(34) in tRNA + L-cysteinyl-[protein] + A + AMP + diphosphate + H(+). Its function is as follows. Catalyzes the 2-thiolation of uridine at the wobble position (U34) of tRNA, leading to the formation of s(2)U34. The sequence is that of tRNA-specific 2-thiouridylase MnmA from Thermotoga petrophila (strain ATCC BAA-488 / DSM 13995 / JCM 10881 / RKU-1).